A 247-amino-acid polypeptide reads, in one-letter code: TM2 domain-containing protein 3 (247 aa).

The first 29 residues, 1–29, serve as a signal peptide directing secretion; the sequence is MAGGVLPLRGLRALCRVLLFLSQFCILSG. Residues 30–179 are Extracellular-facing; it reads GEQSQALAQS…RTFPKMLYCN (150 aa). N-linked (GlcNAc...) asparagine glycosylation is found at Asn87, Asn122, Asn140, Asn157, Asn169, and Asn179. A helical membrane pass occupies residues 180–200; the sequence is WTGGYKWSTALALSITLGGFG. The TM2 domain occupies 183 to 230; it reads GYKWSTALALSITLGGFGADRFYLGQWREGLGKLFSFGGLGIWTLIDV. Topologically, residues 201 to 215 are cytoplasmic; sequence ADRFYLGQWREGLGK. Residues 216-236 traverse the membrane as a helical segment; that stretch reads LFSFGGLGIWTLIDVLLIGVG. At 237–247 the chain is on the extracellular side; sequence YVGPADGSLYI.

Belongs to the TM2 family. Widely expressed.

It is found in the membrane. In terms of biological role, probable positive regulator of Notch signaling. This Homo sapiens (Human) protein is TM2 domain-containing protein 3 (TM2D3).